A 360-amino-acid chain; its full sequence is MTTIQQQRSSLLKGWPQFCEWVTSTNNRIYVGWFGVLMIPCLLTAAACFIVAFIAAPPVDIDGIREPVAGSFLYGNNIISGAVVPSSNAIGLHFYPIWEAATVDEWLYNGGPYQLVIFHFLIGISAYMGRQWELSYRLGMRPWICVAYSAPVSAAFAVFLVYPFGQGSFSDGMPLGISGTFNFMFVFQAEHNILMHPFHMAGVAGMFGGSLFSAMHGSLVTSSLIRETTETESQNYGYKFGQEEETYNIVAAHGYFGRLIFQYASFNNSRSLHFFLAVFPVVCVWLTSMGICTMAFNLNGFNFNQSVVDANGKIVPTWGDVLNRANLGMEVMHERNAHNFPLDLAAAESTTVALSAPAIG.

The next 3 helical transmembrane spans lie at 30-47 (YVGW…TAAA), 119-134 (HFLI…QWEL), and 143-157 (WICV…AAFA). Residue His-119 participates in chlorophyll a binding. Tyr-127 lines the pheophytin a pocket. 2 residues coordinate [CaMn4O5] cluster: Asp-171 and Glu-190. The chain crosses the membrane as a helical span at residues 198-219 (FHMAGVAGMFGGSLFSAMHGSL). His-199 contributes to the chlorophyll a binding site. A quinone is bound by residues His-216 and 265-266 (SF). His-216 contributes to the Fe cation binding site. His-273 serves as a coordination point for Fe cation. The chain crosses the membrane as a helical span at residues 275–289 (FLAVFPVVCVWLTSM). [CaMn4O5] cluster-binding residues include His-333, Glu-334, Asp-343, and Ala-345. A propeptide spanning residues 346–360 (AAESTTVALSAPAIG) is cleaved from the precursor.

The protein belongs to the reaction center PufL/M/PsbA/D family. PSII is composed of 1 copy each of membrane proteins PsbA, PsbB, PsbC, PsbD, PsbE, PsbF, PsbH, PsbI, PsbJ, PsbK, PsbL, PsbM, PsbT, PsbX, PsbY, Psb30/Ycf12, peripheral proteins PsbO, CyanoQ (PsbQ), PsbU, PsbV and a large number of cofactors. It forms dimeric complexes. The D1/D2 heterodimer binds P680, chlorophylls that are the primary electron donor of PSII, and subsequent electron acceptors. It shares a non-heme iron and each subunit binds pheophytin, quinone, additional chlorophylls, carotenoids and lipids. D1 provides most of the ligands for the Mn4-Ca-O5 cluster of the oxygen-evolving complex (OEC). There is also a Cl(-1) ion associated with D1 and D2, which is required for oxygen evolution. The PSII complex binds additional chlorophylls, carotenoids and specific lipids. is required as a cofactor. Tyr-162 forms a radical intermediate that is referred to as redox-active TyrZ, YZ or Y-Z. In terms of processing, C-terminally processed by CtpA; processing is essential to allow assembly of the oxygen-evolving complex and thus photosynthetic growth.

The protein resides in the cellular thylakoid membrane. It carries out the reaction 2 a plastoquinone + 4 hnu + 2 H2O = 2 a plastoquinol + O2. Photosystem II (PSII) is a light-driven water:plastoquinone oxidoreductase that uses light energy to abstract electrons from H(2)O, generating O(2) and a proton gradient subsequently used for ATP formation. It consists of a core antenna complex that captures photons, and an electron transfer chain that converts photonic excitation into a charge separation. The D1/D2 (PsbA/PsbD) reaction center heterodimer binds P680, the primary electron donor of PSII as well as several subsequent electron acceptors. The polypeptide is Photosystem II protein D1 (Prochlorococcus marinus (strain MIT 9301)).